Consider the following 288-residue polypeptide: Heme oxygenase 1 (288 aa).

Over Met1–Ala265 the chain is Cytoplasmic. Heme b contacts are provided by Lys18, His25, Tyr134, and Arg183. The tract at residues His223–Asn260 is disordered. Phosphoserine is present on Ser229. The chain crosses the membrane as a helical; Anchor for type IV membrane protein span at residues Pro266 to Met288.

The protein belongs to the heme oxygenase family. As to quaternary structure, (Microbial infection) Interacts with SARS-CoV-2 ORF3A protein; the interaction promotes ORF3A-induced autophagy but is unlikely to be involved in ORF3A-mediated induction of reticulophagy. In terms of assembly, homodimer and higher order homooligomer. Oligomerization is crucial for its stability and function in the endoplasmic reticulum. Interacts with FLVCR2; this interaction is potentiated in the presence of heme. In terms of processing, a soluble form arises by proteolytic removal of the membrane anchor. In terms of tissue distribution, expressed at higher levels in renal cancer tissue than in normal tissue (at protein level).

It localises to the endoplasmic reticulum membrane. The enzyme catalyses heme b + 3 reduced [NADPH--hemoprotein reductase] + 3 O2 = biliverdin IXalpha + CO + Fe(2+) + 3 oxidized [NADPH--hemoprotein reductase] + 3 H2O + H(+). Its function is as follows. Catalyzes the oxidative cleavage of heme at the alpha-methene bridge carbon, released as carbon monoxide (CO), to generate biliverdin IXalpha, while releasing the central heme iron chelate as ferrous iron. Affords protection against programmed cell death and this cytoprotective effect relies on its ability to catabolize free heme and prevent it from sensitizing cells to undergo apoptosis. In terms of biological role, (Microbial infection) During SARS-COV-2 infection, promotes SARS-CoV-2 ORF3A-mediated autophagy but is unlikely to be required for ORF3A-mediated induction of reticulophagy. Catalyzes the oxidative cleavage of heme at the alpha-methene bridge carbon, released as carbon monoxide (CO), to generate biliverdin IXalpha, while releasing the central heme iron chelate as ferrous iron. The chain is Heme oxygenase 1 (HMOX1) from Homo sapiens (Human).